Consider the following 395-residue polypeptide: Tryptophan synthase beta chain (395 aa).

K89 carries the post-translational modification N6-(pyridoxal phosphate)lysine.

This sequence belongs to the TrpB family. Tetramer of two alpha and two beta chains. The cofactor is pyridoxal 5'-phosphate.

The catalysed reaction is (1S,2R)-1-C-(indol-3-yl)glycerol 3-phosphate + L-serine = D-glyceraldehyde 3-phosphate + L-tryptophan + H2O. It participates in amino-acid biosynthesis; L-tryptophan biosynthesis; L-tryptophan from chorismate: step 5/5. Its function is as follows. The beta subunit is responsible for the synthesis of L-tryptophan from indole and L-serine. In Fusobacterium nucleatum subsp. nucleatum (strain ATCC 25586 / DSM 15643 / BCRC 10681 / CIP 101130 / JCM 8532 / KCTC 2640 / LMG 13131 / VPI 4355), this protein is Tryptophan synthase beta chain.